The sequence spans 141 residues: VLSAADKSNVKAAWGKVGGNAPAYGAEALERMFLSFPTTKTYFPHFDLSHGSAQVKAHGEKVANALTKAVGHLDDLPGTLSDLSDLHAHKLRVDPVNFKLLSHTLLVTLASHLPSDFTPAVHASLDKFLANVSTVLTSKYR.

In terms of domain architecture, Globin spans 1 to 141 (VLSAADKSNV…VSTVLTSKYR (141 aa)). At S3 the chain carries Phosphoserine. Residues K7 and K11 each carry the N6-succinyllysine modification. K16 bears the N6-acetyllysine; alternate mark. K16 carries the post-translational modification N6-succinyllysine; alternate. Phosphotyrosine is present on Y24. S35 is modified (phosphoserine). Position 40 is an N6-succinyllysine (K40). A Phosphoserine modification is found at S49. H58 provides a ligand contact to O2. Residue H87 participates in heme b binding. A Phosphoserine modification is found at S102. T108 is subject to Phosphothreonine. Phosphoserine is present on S124. Residues T134 and T137 each carry the phosphothreonine modification. The residue at position 138 (S138) is a Phosphoserine.

The protein belongs to the globin family. As to quaternary structure, heterotetramer of two alpha chains and two beta chains. As to expression, red blood cells.

Functionally, involved in oxygen transport from the lung to the various peripheral tissues. Its function is as follows. Hemopressin acts as an antagonist peptide of the cannabinoid receptor CNR1. Hemopressin-binding efficiently blocks cannabinoid receptor CNR1 and subsequent signaling. The sequence is that of Hemoglobin subunit alpha (HBA) from Rangifer tarandus (Reindeer).